A 222-amino-acid polypeptide reads, in one-letter code: Large ribosomal subunit protein mL64 (222 aa).

Disordered stretches follow at residues 1-51 (MAAP…PRWQ), 136-170 (RRQQ…HVDP), and 182-222 (LEKQ…TPDS). Residues 141-170 (ARREKAQADKERRARLQAEAQERLGYHVDP) are compositionally biased toward basic and acidic residues. A coiled-coil region spans residues 144–213 (EKAQADKERR…AAMAAAAAQD (70 aa)). Residues 184–200 (KQHRKRLKEEKQRKKKE) carry the Nuclear localization signal motif. Residues 203-212 (AAAMAAAAAQ) are compositionally biased toward low complexity.

Belongs to the mitochondrion-specific ribosomal protein mL64 family. Component of the mitochondrial ribosome large subunit (39S) which comprises a 16S rRNA and about 50 distinct proteins. Interacts with GADD45A, GADD45B and GADD45G. Interacts with NR4A1 via the NR4A1 AB domain. Interacts with ATAD3A and ATAD3B.

Its subcellular location is the mitochondrion. It localises to the nucleus. Acts as a negative regulator of G1 to S cell cycle phase progression by inhibiting cyclin-dependent kinases. Inhibitory effects are additive with GADD45 proteins but also occur in the absence of GADD45 proteins. Acts as a repressor of the orphan nuclear receptor NR4A1 by inhibiting AB domain-mediated transcriptional activity. May be involved in the hormone-mediated regulation of NR4A1 transcriptional activity. May play a role in mitochondrial protein synthesis. This chain is Large ribosomal subunit protein mL64 (GADD45GIP1), found in Bos taurus (Bovine).